Consider the following 577-residue polypeptide: Proline--tRNA ligase (577 aa).

The protein belongs to the class-II aminoacyl-tRNA synthetase family. ProS type 1 subfamily. Homodimer.

It is found in the cytoplasm. It carries out the reaction tRNA(Pro) + L-proline + ATP = L-prolyl-tRNA(Pro) + AMP + diphosphate. Functionally, catalyzes the attachment of proline to tRNA(Pro) in a two-step reaction: proline is first activated by ATP to form Pro-AMP and then transferred to the acceptor end of tRNA(Pro). As ProRS can inadvertently accommodate and process non-cognate amino acids such as alanine and cysteine, to avoid such errors it has two additional distinct editing activities against alanine. One activity is designated as 'pretransfer' editing and involves the tRNA(Pro)-independent hydrolysis of activated Ala-AMP. The other activity is designated 'posttransfer' editing and involves deacylation of mischarged Ala-tRNA(Pro). The misacylated Cys-tRNA(Pro) is not edited by ProRS. This chain is Proline--tRNA ligase, found in Chlamydia abortus (strain DSM 27085 / S26/3) (Chlamydophila abortus).